A 197-amino-acid chain; its full sequence is Phosphoheptose isomerase (197 aa).

Positions 36 to 197 (MVNALLNEGK…IDSQLFGSEE (162 aa)) constitute an SIS domain. Residue 51–53 (NGG) participates in substrate binding. Zn(2+) contacts are provided by His60 and Glu64. Residues Glu64, 93–94 (ND), 119–121 (STS), Ser124, and Gln174 each bind substrate. 2 residues coordinate Zn(2+): Gln174 and His182.

Belongs to the SIS family. GmhA subfamily. Homotetramer. Zn(2+) serves as cofactor.

The protein localises to the cytoplasm. It carries out the reaction 2 D-sedoheptulose 7-phosphate = D-glycero-alpha-D-manno-heptose 7-phosphate + D-glycero-beta-D-manno-heptose 7-phosphate. The protein operates within carbohydrate biosynthesis; D-glycero-D-manno-heptose 7-phosphate biosynthesis; D-glycero-alpha-D-manno-heptose 7-phosphate and D-glycero-beta-D-manno-heptose 7-phosphate from sedoheptulose 7-phosphate: step 1/1. Its function is as follows. Catalyzes the isomerization of sedoheptulose 7-phosphate in D-glycero-D-manno-heptose 7-phosphate. The protein is Phosphoheptose isomerase of Pseudomonas putida (strain W619).